Reading from the N-terminus, the 82-residue chain is U7-hexatoxin-Mg1a (82 aa).

An N-terminal signal peptide occupies residues Met-1–Ala-26. The propeptide occupies Ala-27–Arg-44. 4 disulfide bridges follow: Cys-46-Cys-62, Cys-51-Cys-67, Cys-61-Cys-77, and Cys-69-Cys-75. Residue Arg-80 is modified to Arginine amide.

The protein belongs to the rTX family. As to expression, expressed by the venom gland.

Its subcellular location is the secreted. Induces flaccid paralysis when injected into lepidopteran larvae. Intracranial injection into mice causes awkwardness of movement and laboured respiration until death. The sequence is that of U7-hexatoxin-Mg1a from Macrothele gigas (Japanese funnel web spider).